We begin with the raw amino-acid sequence, 303 residues long: MKQTLIIGTRASKLALVQTYMVRDALQSAHPGLTVAVEHITTRGDIILDRPLNAIGDKGLFVVEIEEAMRAGRIDLAVHSAKDLPSVLPPDMTLAACPRRADPRDALVAQPGMTLAALPSGARVGTSSLRRACQLRALRPDLTLVDLRGNVDTRLRKLREGQYDAIVLAAAGLKRLGLDGAISELIEPDVLIPAVGQGVIGVEARADDEEVLRLLAPLDDQAARIAITAERAFLARIGGGCQVPVGALAHLEGDELLLRGMIGARDGRMVRGMQRGSASDPVGLGCALADELLDQGGRALLAG.

The residue at position 241 (Cys-241) is an S-(dipyrrolylmethanemethyl)cysteine.

This sequence belongs to the HMBS family. As to quaternary structure, monomer. The cofactor is dipyrromethane.

The catalysed reaction is 4 porphobilinogen + H2O = hydroxymethylbilane + 4 NH4(+). Its pathway is porphyrin-containing compound metabolism; protoporphyrin-IX biosynthesis; coproporphyrinogen-III from 5-aminolevulinate: step 2/4. It functions in the pathway porphyrin-containing compound metabolism; chlorophyll biosynthesis. In terms of biological role, tetrapolymerization of the monopyrrole PBG into the hydroxymethylbilane pre-uroporphyrinogen in several discrete steps. The chain is Porphobilinogen deaminase from Roseiflexus sp. (strain RS-1).